Consider the following 304-residue polypeptide: tRNA pseudouridine synthase B (304 aa).

Residue Asp48 is the Nucleophile of the active site.

This sequence belongs to the pseudouridine synthase TruB family. Type 1 subfamily.

The enzyme catalyses uridine(55) in tRNA = pseudouridine(55) in tRNA. Responsible for synthesis of pseudouridine from uracil-55 in the psi GC loop of transfer RNAs. This is tRNA pseudouridine synthase B from Pseudomonas paraeruginosa (strain DSM 24068 / PA7) (Pseudomonas aeruginosa (strain PA7)).